The following is a 139-amino-acid chain: UDP-glucose 4-epimerase (139 aa).

NAD(+) is bound by residues 11-12, 31-36, 58-59, 80-84, Asn-99, and Ser-124; these read YI, DNLCNS, DI, and FAGLK. Position 124 (Ser-124) interacts with substrate. The Proton acceptor role is filled by Tyr-136.

The protein belongs to the NAD(P)-dependent epimerase/dehydratase family. As to quaternary structure, homodimer. NAD(+) is required as a cofactor.

It catalyses the reaction UDP-alpha-D-glucose = UDP-alpha-D-galactose. It participates in carbohydrate metabolism; galactose metabolism. In terms of biological role, involved in the metabolism of galactose. Catalyzes the conversion of UDP-galactose (UDP-Gal) to UDP-glucose (UDP-Glc) through a mechanism involving the transient reduction of NAD. The chain is UDP-glucose 4-epimerase (galE) from Klebsiella pneumoniae.